A 417-amino-acid polypeptide reads, in one-letter code: Gamma-glutamyl phosphate reductase (417 aa).

This sequence belongs to the gamma-glutamyl phosphate reductase family.

The protein localises to the cytoplasm. The catalysed reaction is L-glutamate 5-semialdehyde + phosphate + NADP(+) = L-glutamyl 5-phosphate + NADPH + H(+). The protein operates within amino-acid biosynthesis; L-proline biosynthesis; L-glutamate 5-semialdehyde from L-glutamate: step 2/2. Functionally, catalyzes the NADPH-dependent reduction of L-glutamate 5-phosphate into L-glutamate 5-semialdehyde and phosphate. The product spontaneously undergoes cyclization to form 1-pyrroline-5-carboxylate. The polypeptide is Gamma-glutamyl phosphate reductase (Escherichia coli O127:H6 (strain E2348/69 / EPEC)).